The chain runs to 355 residues: DNA-directed RNA polymerase subunit alpha (355 aa).

The segment at 1–248 is alpha N-terminal domain (alpha-NTD); sequence MYYNNDVSLC…EQLQPFISSD (248 aa). The segment at 267–355 is alpha C-terminal domain (alpha-CTD); it reads YDPVLLRKVD…ELAKQHTDED (89 aa).

Belongs to the RNA polymerase alpha chain family. In terms of assembly, homodimer. The RNAP catalytic core consists of 2 alpha, 1 beta, 1 beta' and 1 omega subunit. When a sigma factor is associated with the core the holoenzyme is formed, which can initiate transcription.

It catalyses the reaction RNA(n) + a ribonucleoside 5'-triphosphate = RNA(n+1) + diphosphate. In terms of biological role, DNA-dependent RNA polymerase catalyzes the transcription of DNA into RNA using the four ribonucleoside triphosphates as substrates. The polypeptide is DNA-directed RNA polymerase subunit alpha (Wolbachia pipientis wMel).